The following is a 313-amino-acid chain: Ribosomal RNA small subunit methyltransferase H (313 aa).

Residues 35-37 (GGH), D55, F79, D101, and Q108 each bind S-adenosyl-L-methionine.

It belongs to the methyltransferase superfamily. RsmH family.

It is found in the cytoplasm. The enzyme catalyses cytidine(1402) in 16S rRNA + S-adenosyl-L-methionine = N(4)-methylcytidine(1402) in 16S rRNA + S-adenosyl-L-homocysteine + H(+). In terms of biological role, specifically methylates the N4 position of cytidine in position 1402 (C1402) of 16S rRNA. The polypeptide is Ribosomal RNA small subunit methyltransferase H (Salmonella typhi).